A 409-amino-acid chain; its full sequence is Tryptophan synthase beta chain (409 aa).

Position 95 is an N6-(pyridoxal phosphate)lysine (Lys-95).

The protein belongs to the TrpB family. As to quaternary structure, tetramer of two alpha and two beta chains. Pyridoxal 5'-phosphate is required as a cofactor.

The enzyme catalyses (1S,2R)-1-C-(indol-3-yl)glycerol 3-phosphate + L-serine = D-glyceraldehyde 3-phosphate + L-tryptophan + H2O. It participates in amino-acid biosynthesis; L-tryptophan biosynthesis; L-tryptophan from chorismate: step 5/5. In terms of biological role, the beta subunit is responsible for the synthesis of L-tryptophan from indole and L-serine. The protein is Tryptophan synthase beta chain of Pseudomonas savastanoi pv. phaseolicola (Pseudomonas syringae pv. phaseolicola).